The chain runs to 806 residues: Transitional endoplasmic reticulum ATPase (806 aa).

The residue at position 2 (alanine 2) is an N-acetylalanine. Serine 3 and serine 7 each carry phosphoserine. Residue lysine 8 forms a Glycyl lysine isopeptide (Lys-Gly) (interchain with G-Cter in SUMO2) linkage. Serine 13 carries the post-translational modification Phosphoserine. Lysine 18 participates in a covalent cross-link: Glycyl lysine isopeptide (Lys-Gly) (interchain with G-Cter in SUMO2). Position 37 is a phosphoserine (serine 37). Residue 247 to 253 (PGTGKTL) coordinates ATP. Lysine 315 carries the N6,N6,N6-trimethyllysine; by VCPKMT modification. The ATP site is built by asparagine 348 and histidine 384. Threonine 436 carries the post-translational modification Phosphothreonine. Serine 462 carries the phosphoserine modification. N6-acetyllysine occurs at positions 502 and 505. 521 to 526 (GCGKTL) contributes to the ATP binding site. Position 668 is an N6-acetyllysine; alternate (lysine 668). Lysine 668 is subject to N6-succinyllysine; alternate. Serine 702 carries the phosphoserine modification. A disordered region spans residues 708–727 (RRERERQTNPSAMEVEEDDP). Residue lysine 754 is modified to N6-acetyllysine. A disordered region spans residues 768–806 (FGSFRFPSGNQGGAGPSQGSGGGTGGNVYTEDNDDDLYG). Residues serine 770, serine 775, and serine 787 each carry the phosphoserine modification. A compositionally biased stretch (gly residues) spans 777 to 793 (NQGGAGPSQGSGGGTGG). Positions 797 to 806 (TEDNDDDLYG) are interaction with UBXN6. The short motif at 802 to 806 (DDLYG) is the PIM motif element. Tyrosine 805 carries the post-translational modification Phosphotyrosine.

It belongs to the AAA ATPase family. Homohexamer. Forms a ring-shaped particle of 12.5 nm diameter, that displays 6-fold radial symmetry. Interacts with NSFL1C-like protein p37; the complex has membrane fusion activity and is required for Golgi and endoplasmic reticulum biogenesis. Interacts with RHBDD1 (via C-terminal domain). Interacts with SELENOS and SYVN1, as well as with DERL1 (via SHP-box motif), DERL2 and DERL3; which probably transfer misfolded proteins from the ER to VCP. Interacts with SVIP and DERL1. Component of a complex required to couple retrotranslocation, ubiquitination and deglycosylation composed of NGLY1, SAKS1, AMFR, VCP and RAD23B. Part of a complex composed of STUB1/CHIP, VCP/p97, CHRNA3, and UBXN2A that modulates the ubiquitination and endoplasmic reticulum-associated degradation (ERAD) of CHRNA3. Within the complex UBXN2A acts as a scaffold protein required for the interaction of CHRNA3 with VCP/p97, this interaction also inhibits CHRNA3 ubiquitination by STUB1/CHIP and subsequently ERAD. Interacts with UBXN2A (via UBX domain); the interaction is required for the interaction of CHRNA3 in the STUB1-VCP-UBXN2A complex. Directly interacts with UBXN4 and RNF19A. Interacts with CASR. Interacts with UBE4B and YOD1. Interacts with clathrin. Interacts with RNF103. Interacts with TRIM13 and TRIM21. Component of a VCP/p97-AMFR/gp78 complex that participates in the final step of the endoplasmic reticulum-associated degradation (ERAD) of HMGCR. Interacts directly with AMFR/gp78 (via its VIM). Interacts with SPRTN; leading to recruitment to stalled replication forks. Part of a ternary complex containing STX5A, NSFL1C and VCP. NSFL1C forms a homotrimer that binds to one end of a VCP homohexamer. The complex binds to membranes enriched in phosphatidylethanolamine-containing lipids and promotes Golgi membrane fusion. Binds to a heterodimer of NPLOC4 and UFD1, binding to this heterodimer inhibits Golgi-membrane fusion. Interaction with VCIP135 leads to dissociation of the complex via ATP hydrolysis by VCP. Part of a ternary complex containing NPLOC4, UFD1 and VCP. Interacts with WASHC5. Interacts with UBOX5. Interacts (via N-terminus) with UBXN7, UBXN8, and probably several other UBX domain-containing proteins (via UBX domains); the interactions are mutually exclusive with VIM-dependent interactions such as those with AMFR and SELENOS. Forms a complex with UBQLN1 and UBXN4. Interacts (via the PIM motif) with RNF31 (via the PUB domain). Interacts with RIGI and RNF125; interaction takes place when RIGI is ubiquitinated via 'Lys-63'-linked ubiquitin on its CARD domains, leading to recruit RNF125 and promote ubiquitination and degradation of RIGI. Interacts with BAG6. Interacts with UBXN10. Interacts with UBXN6; the interaction with UBXN6 is direct and competitive with UFD1. Forms a ternary complex with CAV1 and UBXN6. Interacts with PLAA, UBXN6 and YOD1; may form a complex involved in macroautophagy. Interacts with ANKZF1. Interacts with ubiquitin-binding protein FAF1. Interacts with ZFAND2B (via VIM motif); the interaction is direct. Interacts with ZFAND1 (via its ubiquitin-like region); this interaction occurs in an arsenite-dependent manner. Interacts with CCDC47. Interacts with LMBR1L and UBAC2. Interacts with ATXN3. Interacts with TEX264; bridging VCP to covalent DNA-protein cross-links (DPCs). Phosphorylated by tyrosine kinases in response to T-cell antigen receptor activation. Phosphorylated in mitotic cells. In terms of processing, ISGylated. Post-translationally, methylation at Lys-315 catalyzed by VCPKMT is increased in the presence of ASPSCR1. Lys-315 methylation may decrease ATPase activity.

It is found in the cytoplasm. The protein resides in the cytosol. The protein localises to the endoplasmic reticulum. It localises to the nucleus. Its subcellular location is the stress granule. The enzyme catalyses ATP + H2O = ADP + phosphate + H(+). In terms of biological role, necessary for the fragmentation of Golgi stacks during mitosis and for their reassembly after mitosis. Involved in the formation of the transitional endoplasmic reticulum (tER). The transfer of membranes from the endoplasmic reticulum to the Golgi apparatus occurs via 50-70 nm transition vesicles which derive from part-rough, part-smooth transitional elements of the endoplasmic reticulum (tER). Vesicle budding from the tER is an ATP-dependent process. The ternary complex containing UFD1, VCP and NPLOC4 binds ubiquitinated proteins and is necessary for the export of misfolded proteins from the ER to the cytoplasm, where they are degraded by the proteasome. The NPLOC4-UFD1-VCP complex regulates spindle disassembly at the end of mitosis and is necessary for the formation of a closed nuclear envelope. Regulates E3 ubiquitin-protein ligase activity of RNF19A. Component of the VCP/p97-AMFR/gp78 complex that participates in the final step of the sterol-mediated ubiquitination and endoplasmic reticulum-associated degradation (ERAD) of HMGCR. Mediates the endoplasmic reticulum-associated degradation of CHRNA3 in cortical neurons as part of the STUB1-VCP-UBXN2A complex. Involved in endoplasmic reticulum stress-induced pre-emptive quality control, a mechanism that selectively attenuates the translocation of newly synthesized proteins into the endoplasmic reticulum and reroutes them to the cytosol for proteasomal degradation. Involved in clearance process by mediating G3BP1 extraction from stress granules. Also involved in DNA damage response: recruited to double-strand breaks (DSBs) sites in a RNF8- and RNF168-dependent manner and promotes the recruitment of TP53BP1 at DNA damage sites. Recruited to stalled replication forks by SPRTN: may act by mediating extraction of DNA polymerase eta (POLH) to prevent excessive translesion DNA synthesis and limit the incidence of mutations induced by DNA damage. Together with SPRTN metalloprotease, involved in the repair of covalent DNA-protein cross-links (DPCs) during DNA synthesis. Involved in interstrand cross-link repair in response to replication stress by mediating unloading of the ubiquitinated CMG helicase complex. Mediates extraction of PARP1 trapped to chromatin: recognizes and binds ubiquitinated PARP1 and promotes its removal. Required for cytoplasmic retrotranslocation of stressed/damaged mitochondrial outer-membrane proteins and their subsequent proteasomal degradation. Essential for the maturation of ubiquitin-containing autophagosomes and the clearance of ubiquitinated protein by autophagy. Acts as a negative regulator of type I interferon production by interacting with RIGI: interaction takes place when RIGI is ubiquitinated via 'Lys-63'-linked ubiquitin on its CARD domains, leading to recruit RNF125 and promote ubiquitination and degradation of RIGI. May play a role in the ubiquitin-dependent sorting of membrane proteins to lysosomes where they undergo degradation. May more particularly play a role in caveolins sorting in cells. By controlling the steady-state expression of the IGF1R receptor, indirectly regulates the insulin-like growth factor receptor signaling pathway. This chain is Transitional endoplasmic reticulum ATPase (Vcp), found in Rattus norvegicus (Rat).